Here is a 211-residue protein sequence, read N- to C-terminus: Ribonuclease HII (211 aa).

The RNase H type-2 domain maps to 2 to 211 (MLILGVDEAG…TAQRLKASSV (210 aa)). A divalent metal cation contacts are provided by Asp8, Glu9, and Asp106.

The protein belongs to the RNase HII family. The cofactor is Mn(2+). Requires Mg(2+) as cofactor.

The protein resides in the cytoplasm. The catalysed reaction is Endonucleolytic cleavage to 5'-phosphomonoester.. Functionally, endonuclease that specifically degrades the RNA of RNA-DNA hybrids. This Methanothrix thermoacetophila (strain DSM 6194 / JCM 14653 / NBRC 101360 / PT) (Methanosaeta thermophila) protein is Ribonuclease HII.